The primary structure comprises 777 residues: DnaJ homolog subfamily C member 16 (777 aa).

Positions 1–23 (MELGRAGPAGLLLLLLLLLAAQA) are cleaved as a signal peptide. The Cytoplasmic segment spans residues 24–531 (APERDPYRVL…DSLFHSNWRE (508 aa)). The 65-residue stretch at 28-92 (DPYRVLGVGR…EKRANFDRYG (65 aa)) folds into the J domain. In terms of domain architecture, Thioredoxin spans 117–243 (FDESFFHFPF…LRQFVENLLP (127 aa)). The chain crosses the membrane as a helical; Anchor for type IV membrane protein span at residues 532–552 (MMPLLSLLFSALFILFGTVIV). Residues 553–777 (QAFSDSSDTR…FYIPSWPALD (225 aa)) are Extracellular-facing. The tract at residues 558–589 (SSDTRDSPASEKKDTTAKTEKNDTSFNKESNS) is disordered. Basic and acidic residues predominate over residues 559–580 (SDTRDSPASEKKDTTAKTEKND). Residue Asn-627 is glycosylated (N-linked (GlcNAc...) asparagine).

The protein localises to the endoplasmic reticulum membrane. Its function is as follows. Plays an important role in regulating the size of autophagosomes during the formation process. The chain is DnaJ homolog subfamily C member 16 (DNAJC16) from Gallus gallus (Chicken).